A 34-amino-acid chain; its full sequence is Photosystem II reaction center protein Psb30 (34 aa).

The helical transmembrane segment at 5 to 25 (VLFQLTALIFVVAAGPLVIVL) threads the bilayer.

This sequence belongs to the Psb30/Ycf12 family. As to quaternary structure, PSII is composed of 1 copy each of membrane proteins PsbA, PsbB, PsbC, PsbD, PsbE, PsbF, PsbH, PsbI, PsbJ, PsbK, PsbL, PsbM, PsbT, PsbX, PsbY, PsbZ, Psb30/Ycf12, peripheral proteins of the oxygen-evolving complex and a large number of cofactors. It forms dimeric complexes.

It localises to the plastid. The protein localises to the chloroplast thylakoid membrane. A core subunit of photosystem II (PSII), probably helps stabilize the reaction center. This chain is Photosystem II reaction center protein Psb30, found in Tupiella akineta (Green alga).